The sequence spans 468 residues: 3-isopropylmalate dehydratase large subunit (468 aa).

[4Fe-4S] cluster-binding residues include C347, C407, and C410.

Belongs to the aconitase/IPM isomerase family. LeuC type 1 subfamily. As to quaternary structure, heterodimer of LeuC and LeuD. Requires [4Fe-4S] cluster as cofactor.

The enzyme catalyses (2R,3S)-3-isopropylmalate = (2S)-2-isopropylmalate. It functions in the pathway amino-acid biosynthesis; L-leucine biosynthesis; L-leucine from 3-methyl-2-oxobutanoate: step 2/4. In terms of biological role, catalyzes the isomerization between 2-isopropylmalate and 3-isopropylmalate, via the formation of 2-isopropylmaleate. This chain is 3-isopropylmalate dehydratase large subunit, found in Campylobacter jejuni subsp. jejuni serotype O:23/36 (strain 81-176).